The following is a 613-amino-acid chain: Serine/threonine-protein kinase pkpA (613 aa).

The 253-residue stretch at 17-269 (SKLNTVLGKG…AQEILEHRFL (253 aa)) folds into the Protein kinase domain. Residues 23–31 (LGKGAYKVV) and Lys50 each bind ATP. Asp140 functions as the Proton acceptor in the catalytic mechanism. Disordered stretches follow at residues 424–475 (LQPQ…STML) and 589–613 (VTQR…QELM). The span at 427-441 (QPQPQPQPQPQPQPQ) shows a compositional bias: pro residues. Residues 442-475 (PQFQLQPQLQYLSPQSTTSPGPTSDDNSTNSTML) are compositionally biased toward low complexity. A compositionally biased stretch (polar residues) spans 592–602 (RGLQGTRSGAS).

Belongs to the protein kinase superfamily. Ser/Thr protein kinase family.

The catalysed reaction is L-seryl-[protein] + ATP = O-phospho-L-seryl-[protein] + ADP + H(+). The enzyme catalyses L-threonyl-[protein] + ATP = O-phospho-L-threonyl-[protein] + ADP + H(+). Functionally, serine/threonine protein kinase that probably participates as an intermediate in an intracellular system controlling nuclear proliferation. The chain is Serine/threonine-protein kinase pkpA (pkpA) from Phycomyces blakesleeanus (strain ATCC 8743b / DSM 1359 / FGSC 10004 / NBRC 33097 / NRRL 1555).